Consider the following 396-residue polypeptide: NASP-related protein sim3 (396 aa).

The segment at 1-31 (MSSDTKTLENSKGNSATDADTKNPSSSDSRA) is disordered. TPR repeat units lie at residues 32–65 (IEQL…SESI) and 89–122 (IENS…GSFT). The disordered stretch occupies residues 135–164 (NEENSSIAHPEKESEEKETNEASPASEEDE). The span at 143-154 (HPEKESEEKETN) shows a compositional bias: basic and acidic residues. Residues 199 to 232 (ADIYDLLGELSLEIENFSQASQDLKTALEWKEKV) form a TPR 3 repeat. Residues 267-329 (CEHVEKAAEI…QKTLDLKHGA (63 aa)) are a coiled coil. Residues 284–301 (RENEVTDKKGKGKQKAEE) show a composition bias toward basic and acidic residues. Disordered stretches follow at residues 284-307 (RENE…LTSD) and 334-396 (EAVM…KKKD). A compositionally biased stretch (low complexity) spans 343–353 (SSLLSKDSSSL).

This sequence belongs to the NASP family. In terms of assembly, interacts with cnp1, hht1, hht2 and hht3; has a preference for CENP-A (cnp1) over histone H3 (hht1/2/3).

It is found in the nucleus. In terms of biological role, histone H3 and H3-like CENP-A-specific chaperone. Promotes delivery and incorporation of CENP-A in centromeric chromatin, probably by escorting nascent CENP-A to CENP-A chromatin assembly factors. Required for central core silencing and normal chromosome segregation. The polypeptide is NASP-related protein sim3 (sim3) (Schizosaccharomyces pombe (strain 972 / ATCC 24843) (Fission yeast)).